The primary structure comprises 1168 residues: MEPITFTARKHLLSNEVSVDFGLQLVGSLPVHSLTTMPMLPWVVAEVRRLSRQSTRKEPVTKQVRLCVSPSGLRCEPEPGRSQQWDPLIYSSIFECKPQRVHKLIHNSHDPSYFACLIKEDAVHRQSICYVFKADDQTKVPEIISSIRQAGKIARQEELHCPSEFDDTFSKKFEVLFCGRVTVAHKKAPPALIDECIEKFNHVSGSRGSESPRPNPPHAAPTGSQEPVRRPMRKSFSQPGLRSLAFRKELQDGGLRSSGFFSSFEESDIENHLISGHNIVQPTDIEENRTMLFTIGQSEVYLISPDTKKIALEKNFKEISFCSQGIRHVDHFGFICRESSGGGGFHFVCYVFQCTNEALVDEIMMTLKQAFTVAAVQQTAKAPAQLCEGCPLQSLHKLCERIEGMNSSKTKLELQKHLTTLTNQEQATIFEEVQKLRPRNEQRENELIISFLRCLYEEKQKEHIHIGEMKQTSQMAAENIGSELPPSATRFRLDMLKNKAKRSLTESLESILSRGNKARGLQEHSISVDLDSSLSSTLSNTSKEPSVCEKEALPISESSFKLLGSSEDLSSDSESHLPEEPAPLSPQQAFRRRANTLSHFPIECQEPPQPARGSPGVSQRKLMRYHSVSTETPHERKDFESKANHLGDSGGTPVKTRRHSWRQQIFLRVATPQKACDSSSRYEDYSELGELPPRSPLEPVCEDGPFGPPPEEKKRTSRELRELWQKAILQQILLLRMEKENQKLQASENDLLNKRLKLDYEEITPCLKEVTTVWEKMLSTPGRSKIKFDMEKMHSAVGQGVPRHHRGEIWKFLAEQFHLKHQFPSKQQPKDVPYKELLKQLTSQQHAILIDLGRTFPTHPYFSAQLGAGQLSLYNILKAYSLLDQEVGYCQGLSFVAGILLLHMSEEEAFKMLKFLMFDMGLRKQYRPDMIILQIQMYQLSRLLHDYHRDLYNHLEEHEIGPSLYAAPWFLTMFASQFPLGFVARVFDMIFLQGTEVIFKVALSLLGSHKPLILQHENLETIVDFIKSTLPNLGLVQMEKTINQVFEMDIAKQLQAYEVEYHVLQEELIDSSPLSDNQRMDKLEKTNSSLRKQNLDLLEQLQVANGRIQSLEATIEKLLSSESKLKQAMLTLELERSALLQTVEELRRRSAEPSDREPECTQPEPTGD.

Residue serine 146 is modified to Phosphoserine. The tract at residues 203–238 (VSGSRGSESPRPNPPHAAPTGSQEPVRRPMRKSFSQ) is disordered. Residue serine 235 is modified to Phosphoserine; by PKB/AKT1. Serine 237 bears the Phosphoserine mark. Residues 246–404 (FRKELQDGGL…LHKLCERIEG (159 aa)) enclose the PID domain. Serine 503 is subject to Phosphoserine. Threonine 505 is subject to Phosphothreonine; by PKB/AKT1. Residues serine 507, serine 525, and serine 527 each carry the phosphoserine modification. Positions 532–542 (SSLSSTLSNTS) are enriched in low complexity. 2 disordered regions span residues 532 to 551 (SSLS…CEKE) and 564 to 587 (GSSE…LSPQ). Phosphoserine is present on residues serine 565, serine 566, serine 570, serine 571, and serine 585. Residue threonine 596 is modified to Phosphothreonine. Serine 614 is modified (phosphoserine). Serine 627 is subject to Phosphoserine; by PKB/AKT1. 2 disordered regions span residues 628–658 (VSTE…KTRR) and 678–717 (SSSR…KRTS). The span at 632 to 645 (TPHERKDFESKANH) shows a compositional bias: basic and acidic residues. Phosphoserine occurs at positions 695 and 941. In terms of domain architecture, Rab-GAP TBC spans 800-994 (GVPRHHRGEI…RVFDMIFLQG (195 aa)). Residue tyrosine 952 is modified to Phosphotyrosine. The residue at position 1131 (threonine 1131) is a Phosphothreonine. A compositionally biased stretch (basic and acidic residues) spans 1145 to 1159 (ELRRRSAEPSDREPE). The tract at residues 1145–1168 (ELRRRSAEPSDREPECTQPEPTGD) is disordered.

Interacts with APPL2 (via BAR domain); interaction is dependent of TBC1D1 phosphorylation at Ser-235; interaction diminishes the phosphorylation of TBC1D1 at Thr-596, resulting in inhibition of SLC2A4/GLUT4 translocation and glucose uptake. In terms of processing, insulin-stimulated phosphorylation by AKT family kinases stimulates SLC2A4/GLUT4 translocation.

The protein localises to the nucleus. May act as a GTPase-activating protein for Rab family protein(s). May play a role in the cell cycle and differentiation of various tissues. Involved in the trafficking and translocation of GLUT4-containing vesicles and insulin-stimulated glucose uptake into cells. In Homo sapiens (Human), this protein is TBC1 domain family member 1 (TBC1D1).